A 938-amino-acid polypeptide reads, in one-letter code: Auxilin (938 aa).

The segment at 19–41 (AAAGENRMKDSENKGASSPDMEP) is disordered. A run of 3 repeats spans residues 61–64 (NLKD), 65–68 (NLKD), and 69–72 (TLKD). A 3 X 4 AA approximate tandem repeats region spans residues 61 to 72 (NLKDNLKDTLKD). The 168-residue stretch at 80–247 (SVSSYTKGDL…GYMCDLLADK (168 aa)) folds into the Phosphatase tensin-type domain. The residue at position 137 (Ser137) is a Phosphoserine. The Phosphocysteine intermediate role is filled by Cys189. Residues 253–391 (FKPLTIKAIT…FQVTLDIEVQ (139 aa)) form the C2 tensin-type domain. The SH3-binding signature appears at 434–442 (PADLPPDHP). The disordered stretch occupies residues 467-801 (EEDHAALVNQ…GKGSTNLEGK (335 aa)). Ser478 and Ser481 each carry phosphoserine. The span at 531 to 548 (DVSTNFSSLAAPPSNSEL) shows a compositional bias: polar residues. The segment covering 559-569 (TGPAQAGQAGV) has biased composition (low complexity). Polar residues-rich tracts occupy residues 579–596 (VSAQSTPRRTATSASASP) and 624–654 (FLNTSSASSDPFLQPTRSPSPTVHASSTPAV). Position 595 is a phosphoserine (Ser595). Low complexity predominate over residues 679–694 (SAATSPTGSSHGTPTH). A compositionally biased stretch (polar residues) spans 754–781 (NWQQTQSKPQSSMPHSSPQNRPNYNVSF). A J domain is found at 874–938 (TKWKPVGMAD…FENQGQKPLY (65 aa)).

Forms a complex composed of HSPA8, CLTC and DNAJC6. Interacts with HSPA8/HSC70 in an ATP-dependent manner; this interaction stimulates the HSPA8's ATPase activity. Interacts with CLTC; this interaction produces a local change in heavy-chain contacts, creating a detectable global distortion of the clathrin coat. Interacts with AP2A2. Interacts with DNM1(GTP-bound form); this interaction allows clathrin-coated vesicle (CCV) formation at the plasma membrane. In terms of processing, the N-terminus is blocked. Phosphorylation at Ser-595 modulates its ability to bind CLTC and therefore the synaptic vesicle endocytosis (SVE).

The protein resides in the cytoplasmic vesicle. It localises to the clathrin-coated vesicle. In terms of biological role, may act as a protein phosphatase and/or a lipid phosphatase. Co-chaperone that recruits HSPA8/HSC70 to clathrin-coated vesicles (CCVs) and promotes the ATP-dependent dissociation of clathrin from CCVs and participates in clathrin-mediated endocytosis of synaptic vesicles and their recycling and also in intracellular trafficking. Firstly, binds tightly to the clathrin cages, at a ratio of one DNAJC6 per clathrin triskelion. The HSPA8:ATP complex then binds to the clathrin-auxilin cage, initially at a ratio of one HSPA8 per triskelion leading to ATP hydrolysis stimulation and causing a conformational change in the HSPA8. This cycle is repeated three times to drive to a complex containing the clathrin-auxilin cage associated to three HSPA8:ADP complex. The ATP hydrolysis of the third HSPA8:ATP complex leads to a concerted dismantling of the cage into component triskelia. Then, dissociates from the released triskelia and be recycled to initiate another cycle of HSPA8's recruitment. Also acts during the early steps of clathrin-coated vesicle (CCV) formation through its interaction with the GTP bound form of DNM1. This Mus musculus (Mouse) protein is Auxilin.